We begin with the raw amino-acid sequence, 333 residues long: DNA-directed RNA polymerase subunit alpha (333 aa).

Positions 1–234 (MQISVNEFLT…QQLAAFVDLK (234 aa)) are alpha N-terminal domain (alpha-NTD). Residues 248 to 333 (IDPILLRPVD…SLKKDDKATA (86 aa)) form an alpha C-terminal domain (alpha-CTD) region.

Belongs to the RNA polymerase alpha chain family. As to quaternary structure, homodimer. The RNAP catalytic core consists of 2 alpha, 1 beta, 1 beta' and 1 omega subunit. When a sigma factor is associated with the core the holoenzyme is formed, which can initiate transcription.

The catalysed reaction is RNA(n) + a ribonucleoside 5'-triphosphate = RNA(n+1) + diphosphate. Functionally, DNA-dependent RNA polymerase catalyzes the transcription of DNA into RNA using the four ribonucleoside triphosphates as substrates. This Ectopseudomonas mendocina (strain ymp) (Pseudomonas mendocina) protein is DNA-directed RNA polymerase subunit alpha.